The chain runs to 214 residues: Large ribosomal subunit protein uL16-like (214 aa).

The protein belongs to the universal ribosomal protein uL16 family. In terms of assembly, component of the 60S large ribosomal subunit (LSU).

It is found in the cytoplasm. Functionally, testis-specific component of the ribosome, which is required for the transition from prophase to metaphase in male meiosis I. Compensates for the inactivated X-linked RPL10 paralog during spermatogenesis. The ribosome is a large ribonucleoprotein complex responsible for the synthesis of proteins in the cell. The small ribosomal subunit (SSU) binds messenger RNAs (mRNAs) and translates the encoded message by selecting cognate aminoacyl-transfer RNA (tRNA) molecules. The large subunit (LSU) contains the ribosomal catalytic site termed the peptidyl transferase center (PTC), which catalyzes the formation of peptide bonds, thereby polymerizing the amino acids delivered by tRNAs into a polypeptide chain. The nascent polypeptides leave the ribosome through a tunnel in the LSU and interact with protein factors that function in enzymatic processing, targeting, and the membrane insertion of nascent chains at the exit of the ribosomal tunnel. This chain is Large ribosomal subunit protein uL16-like (RPL10L), found in Bos taurus (Bovine).